The sequence spans 429 residues: MKRVLGIILGGGAGTRLYPLTKLRAKPAVPLAGKYRLIDIPVSNCINSEIHKIYILTQFNSASLNRHISRTYNFTGFTEGFTEVLAAQQTKENPDWFQGTADAVRQYSWLLEDWDVDEYIILSGDHLYRMDYREFIQRHRDTGADITLSVVPVGEKVAPAFGLMKIDANGRVVDFSEKPTGEALKAMQVDTQSLGLDPEQAKEKPYIASMGIYVFKKQVLLDLLKEGKDKTDFGKEIIPDAAKDYNVQAYLFDDYWADIGTIEAFYEANLGLTKQPIPPFSFYDEKAPIYTRARYLPPTKVLNADVTESMISEGCIIKNCRIHHSVLGIRTRVEADCTIEDTMIMGADYYQPYEKRQDCLRRGKPPIGIGEGTTIRRAIIDKNARIGKNVMIVNKENVEESNREELGYYIRSGITVVLKNAVIPDGTVI.

Residues Gly162, 177 to 178 (EK), and Ser209 contribute to the alpha-D-glucose 1-phosphate site.

The protein belongs to the bacterial/plant glucose-1-phosphate adenylyltransferase family. Homotetramer.

The enzyme catalyses alpha-D-glucose 1-phosphate + ATP + H(+) = ADP-alpha-D-glucose + diphosphate. It functions in the pathway glycan biosynthesis; glycogen biosynthesis. Involved in the biosynthesis of ADP-glucose, a building block required for the elongation reactions to produce glycogen. Catalyzes the reaction between ATP and alpha-D-glucose 1-phosphate (G1P) to produce pyrophosphate and ADP-Glc. The protein is Glucose-1-phosphate adenylyltransferase of Picosynechococcus sp. (strain ATCC 27264 / PCC 7002 / PR-6) (Agmenellum quadruplicatum).